We begin with the raw amino-acid sequence, 716 residues long: MASNSLLRSSSNFFLGSHIIISSPTPKTTRKPSFPFSFVSRAKYQITRSSQDENSPNGKPNSPFSSQVALAAILLSSISSSPLALAVVDEPASPSVVIESQAVKPSTPSPLFIQNEILKAPSPKSSDLPEGSQWRYSEFLNAVKKGKVERVRFSKDGSVVQLTAVDNRRASVIVPNDPDLIDILAMNGVDISVSEGESSGNDLFTVIGNLIFPLLAFGGLFLLFRRAQGGPGGGPGGLGGPMDFGRSKSKFQEVPETGVSFADVAGADQAKLELQEVVDFLKNPDKYTALGAKIPKGCLLVGPPGTGKTLLARAVAGEAGVPFFSCAASEFVELFVGVGASRVRDLFEKAKSKAPCIVFIDEIDAVGRQRGAGMGGGNDEREQTINQLLTEMDGFSGNSGVIVLAATNRPDVLDSALLRPGRFDRQVTVDRPDVAGRVKILQVHSRGKALGKDVDFDKVARRTPGFTGADLQNLMNEAAILAARRELKEISKDEISDALERIIAGPEKKNAVVSEEKKRLVAYHEAGHALVGALMPEYDPVAKISIIPRGQAGGLTFFAPSEERLESGLYSRSYLENQMAVALGGRVAEEVIFGDENVTTGASNDFMQVSRVARQMIERFGFSKKIGQVAVGGPGGNPFMGQQMSSQKDYSMATADIVDAEVRELVEKAYKRATEIITTHIDILHKLAQLLIEKETVDGEEFMSLFIDGQAELYIS.

Residues 1–48 (MASNSLLRSSSNFFLGSHIIISSPTPKTTRKPSFPFSFVSRAKYQITR) constitute a chloroplast transit peptide. The transit peptide at 49–86 (SSQDENSPNGKPNSPFSSQVALAAILLSSISSSPLALA) directs the protein to the thylakoid. A helical membrane pass occupies residues 204 to 224 (FTVIGNLIFPLLAFGGLFLLF). 302 to 309 (GPPGTGKT) contacts ATP. H524 is a binding site for Zn(2+). Residue E525 is part of the active site. Zn(2+) contacts are provided by H528 and D605.

The protein in the N-terminal section; belongs to the AAA ATPase family. This sequence in the C-terminal section; belongs to the peptidase M41 family. In terms of assembly, interacts with CHIP and HSP70. Heterohexamers with FTSH2, FTSH5 and FTSH8. It depends on Zn(2+) as a cofactor. The FTSH1 precursor is ubiquitinated by CHIP in the cytoplasm. Ubiquitous.

It localises to the plastid. The protein resides in the chloroplast thylakoid membrane. Functionally, part of a complex that function as an ATP-dependent zinc metallopeptidase. Involved in the thylakoid formation and in the removal of damaged D1 in the photosystem II, preventing cell death under high-intensity light conditions. The polypeptide is ATP-dependent zinc metalloprotease FTSH 1, chloroplastic (FTSH1) (Arabidopsis thaliana (Mouse-ear cress)).